The sequence spans 741 residues: Cysteine--tRNA ligase, cytoplasmic (741 aa).

Residue Cys46 participates in Zn(2+) binding. Residues 48–58 (PTVYDASHMGH) carry the 'HIGH' region motif. A Phosphoserine modification is found at Ser297. 3 residues coordinate Zn(2+): Cys340, His365, and Glu369. Residues 398-402 (KMSKS) carry the 'KMSKS' region motif. Position 401 (Lys401) interacts with ATP. Residues 697-718 (FDENGLPTHDKEGKEVSKGQIK) form a disordered region. The span at 704 to 713 (THDKEGKEVS) shows a compositional bias: basic and acidic residues.

It belongs to the class-I aminoacyl-tRNA synthetase family. The cofactor is Zn(2+).

The protein resides in the cytoplasm. It catalyses the reaction tRNA(Cys) + L-cysteine + ATP = L-cysteinyl-tRNA(Cys) + AMP + diphosphate. The polypeptide is Cysteine--tRNA ligase, cytoplasmic (Drosophila melanogaster (Fruit fly)).